The sequence spans 31 residues: Nemertide alpha-4 (31 aa).

3 disulfide bridges follow: Cys-2/Cys-16, Cys-9/Cys-20, and Cys-15/Cys-26. A 4-hydroxyproline mark is found at Pro-28 and Pro-29.

The protein belongs to the nemertide family. Confined to the epidermis and to the mucus layer.

The protein localises to the secreted. Potent toxin, demonstrating strong inhibitory effects on insect sodium channels (Nav) and reduced activity on mammalian sodium channels. Potently inhibits inactivation of insect sodium channels of B.germanica (BgNav1) (EC(50)=11.1 nM). Also delays the inactivation of most mammalian Nav (human Nav1.1/SCN1A; EC(50)=92 nM, rat Nav1.2/SCN2A; EC(50)=134.2 nM, rat Nav1.3/SCN3A; EC(50)=12.9 nM, rat Nav1.4/SCN4A; EC(50)=14.6 nM, human Nav1.5/SCN5A; EC(50)=27.8 nM, mouse Nav1.6/SCN8A; EC(50)=123.6 nM, human Nav1.9/SCN9A; EC(50)=80.5 nM). Inactivation is completely prevented by a concentration of 1 uM, resulting in sustained, non-inactivating currents. In addition, the toxin significantly enhances the recovery from inactivation, and the open state is not required for the toxin to interact with the channel. In vivo, injection into brine shrimp (Artemia salina) stops movement or causes death after 24 hours (EC(50)=0.4 uM). The sequence is that of Nemertide alpha-4 from Lineus sanguineus (Ribbon worm).